The primary structure comprises 118 residues: Large ribosomal subunit protein bL20 (118 aa).

Belongs to the bacterial ribosomal protein bL20 family.

Functionally, binds directly to 23S ribosomal RNA and is necessary for the in vitro assembly process of the 50S ribosomal subunit. It is not involved in the protein synthesizing functions of that subunit. The sequence is that of Large ribosomal subunit protein bL20 from Sulfurimonas denitrificans (strain ATCC 33889 / DSM 1251) (Thiomicrospira denitrificans (strain ATCC 33889 / DSM 1251)).